The chain runs to 380 residues: NF-kappa-B inhibitor-like protein 1 (380 aa).

Positions 1-34 (MSNPSPQVPEEEASTSVCRPKSSMASTSRRQRRE) are disordered. ANK repeat units lie at residues 64–93 (GQPP…DPAH) and 97–133 (HGDT…IKNK). Disordered stretches follow at residues 131–166 (KNKD…EWRQ) and 185–293 (GDAS…RGSL). Phosphoserine is present on S150. The span at 237 to 286 (QQEEEQRLFRERARAKEEELRESRARRAQEALGDREPKPTRAGPREEHPR) shows a compositional bias: basic and acidic residues.

As to quaternary structure, interacts with CACTIN (via N-terminal domain); the interaction occurs in a pro-inflammatory-independent manner.

It localises to the nucleus. In terms of biological role, involved in the regulation of innate immune response. Acts as negative regulator of Toll-like receptor and interferon-regulatory factor (IRF) signaling pathways. Contributes to the negative regulation of transcriptional activation of NF-kappa-B target genes in response to endogenous pro-inflammatory stimuli. The sequence is that of NF-kappa-B inhibitor-like protein 1 (NFKBIL1) from Pan troglodytes (Chimpanzee).